We begin with the raw amino-acid sequence, 282 residues long: Undecaprenyl-diphosphatase (282 aa).

Helical transmembrane passes span 40–60 (GAAF…IYFF), 85–105 (AKMG…GLLF), 117–137 (YWIS…EWLI), 158–178 (ALII…RSGV), 193–213 (AARF…IYQL), 231–251 (IVAT…LITF), and 258–278 (AVFI…IATG).

It belongs to the UppP family.

It is found in the cell inner membrane. The enzyme catalyses di-trans,octa-cis-undecaprenyl diphosphate + H2O = di-trans,octa-cis-undecaprenyl phosphate + phosphate + H(+). Functionally, catalyzes the dephosphorylation of undecaprenyl diphosphate (UPP). Confers resistance to bacitracin. The polypeptide is Undecaprenyl-diphosphatase (Prosthecochloris aestuarii (strain DSM 271 / SK 413)).